The following is a 415-amino-acid chain: Procollagen C-endopeptidase enhancer 2 (415 aa).

The first 23 residues, 1–23 (MRGANAWAPLCLLLAAATQLSRQ), serve as a signal peptide directing secretion. Disulfide bonds link C33-C59, C86-C107, C154-C181, C208-C231, C297-C364, C301-C367, and C312-C415. 2 CUB domains span residues 33–144 (CGGI…FSAA) and 154–268 (CGGL…YIFR). The NTR domain maps to 297-415 (CQQKCRRTGT…LLDALKNKQC (119 aa)). N-linked (GlcNAc...) asparagine glycosylation is present at N355.

In terms of assembly, interacts with heparin with high affinity, and type I or II collagen. In terms of processing, O-glycosylated; contains sialic acid. As to expression, highly expressed in the heart, trabecular meshwork, pituitary gland, bladder, mammary gland, trachea and placenta and weakly expressed in the brain. Expressed in cartilage.

It is found in the secreted. Its function is as follows. Binds to the C-terminal propeptide of types I and II procollagens and may enhance the cleavage of that propeptide by BMP1. This chain is Procollagen C-endopeptidase enhancer 2 (PCOLCE2), found in Homo sapiens (Human).